We begin with the raw amino-acid sequence, 190 residues long: Protein GrpE (190 aa).

The interval 21–49 (DDLQEEVEATETEETVEEVIEETPEKSEL) is disordered. A compositionally biased stretch (acidic residues) spans 23–42 (LQEEVEATETEETVEEVIEE).

The protein belongs to the GrpE family. As to quaternary structure, homodimer.

The protein resides in the cytoplasm. Functionally, participates actively in the response to hyperosmotic and heat shock by preventing the aggregation of stress-denatured proteins, in association with DnaK and GrpE. It is the nucleotide exchange factor for DnaK and may function as a thermosensor. Unfolded proteins bind initially to DnaJ; upon interaction with the DnaJ-bound protein, DnaK hydrolyzes its bound ATP, resulting in the formation of a stable complex. GrpE releases ADP from DnaK; ATP binding to DnaK triggers the release of the substrate protein, thus completing the reaction cycle. Several rounds of ATP-dependent interactions between DnaJ, DnaK and GrpE are required for fully efficient folding. The chain is Protein GrpE from Streptococcus pyogenes serotype M3 (strain SSI-1).